Here is a 144-residue protein sequence, read N- to C-terminus: Deoxyuridine 5'-triphosphate nucleotidohydrolase (144 aa).

Substrate is bound by residues 63-65 (RSG), Asn-76, and 80-82 (TID).

It belongs to the dUTPase family. It depends on Mg(2+) as a cofactor.

The catalysed reaction is dUTP + H2O = dUMP + diphosphate + H(+). It functions in the pathway pyrimidine metabolism; dUMP biosynthesis; dUMP from dCTP (dUTP route): step 2/2. This enzyme is involved in nucleotide metabolism: it produces dUMP, the immediate precursor of thymidine nucleotides and it decreases the intracellular concentration of dUTP so that uracil cannot be incorporated into DNA. The protein is Deoxyuridine 5'-triphosphate nucleotidohydrolase of Porphyromonas gingivalis (strain ATCC BAA-308 / W83).